We begin with the raw amino-acid sequence, 260 residues long: D-threitol dehydrogenase (260 aa).

Position 21-50 (21-50 (LVTGAASGIGAAIASAYATKGARIAAVDLN)) interacts with NAD(+). Y166 (proton acceptor) is an active-site residue. An NAD(+)-binding site is contributed by K170.

It belongs to the short-chain dehydrogenases/reductases (SDR) family.

The catalysed reaction is D-threitol + NAD(+) = D-erythrulose + NADH + H(+). It functions in the pathway carbohydrate metabolism; D-threitol degradation. Its function is as follows. Catalyzes the NAD-dependent reversible oxidation of D-threitol. Involved in the degradation pathway of D-threitol, that allows M.smegmatis to grow on this compound as the sole carbon source. Does not catalyze the oxidation of xylitol, L-sorbitol, and L-sorbose. The chain is D-threitol dehydrogenase from Mycolicibacterium smegmatis (strain ATCC 700084 / mc(2)155) (Mycobacterium smegmatis).